A 585-amino-acid chain; its full sequence is Phosphomethylpyrimidine synthase (585 aa).

Basic and acidic residues predominate over residues arginine 89–tyrosine 107. The disordered stretch occupies residues arginine 89–histidine 116. Substrate contacts are provided by residues asparagine 199, methionine 228, tyrosine 257, histidine 293, serine 313 to glycine 315, aspartate 354 to arginine 357, and glutamate 393. Residue histidine 397 coordinates Zn(2+). Substrate is bound at residue tyrosine 420. Histidine 461 lines the Zn(2+) pocket. [4Fe-4S] cluster contacts are provided by cysteine 541, cysteine 544, and cysteine 549.

Belongs to the ThiC family. [4Fe-4S] cluster is required as a cofactor.

It carries out the reaction 5-amino-1-(5-phospho-beta-D-ribosyl)imidazole + S-adenosyl-L-methionine = 4-amino-2-methyl-5-(phosphooxymethyl)pyrimidine + CO + 5'-deoxyadenosine + formate + L-methionine + 3 H(+). It functions in the pathway cofactor biosynthesis; thiamine diphosphate biosynthesis. Catalyzes the synthesis of the hydroxymethylpyrimidine phosphate (HMP-P) moiety of thiamine from aminoimidazole ribotide (AIR) in a radical S-adenosyl-L-methionine (SAM)-dependent reaction. The protein is Phosphomethylpyrimidine synthase of Bacillus pumilus (strain SAFR-032).